A 525-amino-acid polypeptide reads, in one-letter code: MAESPPTEVPEPPARPVLVVDFGAQYAQLIARRVREARVFSEVIPHTATIEEIKARQPRALVLSGGPSSVYEPGAPQLDPAVFDLGVPVFGICYGFQAMAQALGGTVAHTGTSEYGRTELKVLGGELHSGLPGVQPVWMSHGDAVTAAPDGFEVVASSPGAVVAAFENRARRLAGVQYHPEVMHTPHGQQVLSRFLHDFAGLGADWTAANIAGVLVEQVRAQIGDGHAICGLSGGVDSAVAAALVQRAIGDRLTCVFVDHGLLRAGERAQVQRDFVAATGANLVTVDAADTFLQALAGVTNPEGKRKIIGRQFIRAFEGAVRDVLGDKPVEFLVQGTLYPDVVESGGGSGTANIKSHHNVGGLPGDLKFTLVEPLRLLFKDEVRAVGRELGLPEEIVARQPFPGPGLGIRIVGEVTATRLDTLRRADSIAREELTAAGLDSLIWQCPVVLLGEVRSVGVQGDNRTYGHPIVLRPVTSEDAMTADWTRVPYEVLERISTRITNEVPEVNRVVLDITSKPPGTIEWE.

The Glutamine amidotransferase type-1 domain occupies 16 to 205; the sequence is PVLVVDFGAQ…LHDFAGLGAD (190 aa). The Nucleophile role is filled by C93. Residues H179 and E181 contribute to the active site. Residues 206-399 enclose the GMPS ATP-PPase domain; sequence WTAANIAGVL…LGLPEEIVAR (194 aa). 233–239 is an ATP binding site; the sequence is SGGVDSA.

In terms of assembly, homodimer.

The catalysed reaction is XMP + L-glutamine + ATP + H2O = GMP + L-glutamate + AMP + diphosphate + 2 H(+). It participates in purine metabolism; GMP biosynthesis; GMP from XMP (L-Gln route): step 1/1. Catalyzes the synthesis of GMP from XMP. The sequence is that of GMP synthase [glutamine-hydrolyzing] from Mycolicibacterium paratuberculosis (strain ATCC BAA-968 / K-10) (Mycobacterium paratuberculosis).